A 1069-amino-acid chain; its full sequence is Cellulose synthase A catalytic subunit 5 [UDP-forming] (1069 aa).

Methionine 1 is subject to N-acetylmethionine. Topologically, residues 1–265 (MNTGGRLIAG…KSSKINPYRM (265 aa)) are cytoplasmic. The Zn(2+) site is built by cysteine 39, cysteine 42, cysteine 58, cysteine 61, cysteine 66, cysteine 69, cysteine 81, and cysteine 84. The RING-type; degenerate zinc-finger motif lies at 39–85 (CQICGDEIELSVDGESFVACNECAFPVCRPCYEYERREGNQSCPQCK). A phosphoserine mark is found at serine 229 and serine 230. A helical membrane pass occupies residues 266–286 (LIVLRLVILGLFFHYRILHPV). Topologically, residues 287 to 288 (ND) are extracellular. Residues 289–309 (AYALWLISVICEIWFAVSWVL) form a helical membrane-spanning segment. Residues 310 to 853 (DQFPKWYPIE…INSVVYPWTS (544 aa)) are Cytoplasmic-facing. Residues serine 348, lysine 354, glutamate 355, and aspartate 384 each contribute to the UDP-alpha-D-glucose site. Aspartate 384 is a catalytic residue. Residues 438-464 (VRERRAMKRDYEEFKVKINALVATAQK) adopt a coiled-coil conformation. Lysine 525 contributes to the UDP-alpha-D-glucose binding site. Positions 526 and 550 each coordinate Mn(2+). The active site involves aspartate 770. The helical transmembrane segment at 854 to 874 (IPLLVYCSLPAICLLTGKFIV) threads the bilayer. Over 875–879 (PEISN) the chain is Extracellular. The chain crosses the membrane as a helical span at residues 880-900 (YASILFMALFGSIAVTGILEM). The Cytoplasmic segment spans residues 901–915 (QWGKVGIDDWWRNEQ). A helical membrane pass occupies residues 916–936 (FWVIGGVSAHLFALFQGLLKV). The Extracellular portion of the chain corresponds to 937 to 965 (LAGVETNFTVTSKAADDGEFSELYIFKWT). An N-linked (GlcNAc...) asparagine glycan is attached at asparagine 943. Residues 966–986 (SLLIPPTTLLIINVIGVIVGI) form a helical membrane-spanning segment. Topologically, residues 987-997 (SDAISNGYDSW) are cytoplasmic. Residues 998–1018 (GPLFGRLFFAFWVILHLYPFL) form a helical membrane-spanning segment. The Extracellular portion of the chain corresponds to 1019 to 1027 (KGLLGKQDR). Residues 1028–1048 (MPTIILVWSILLASILTLLWV) form a helical membrane-spanning segment. Over 1049–1069 (RVNPFVAKGGPILEICGLDCL) the chain is Cytoplasmic.

Belongs to the glycosyltransferase 2 family. Plant cellulose synthase subfamily. Zn(2+) is required as a cofactor. Mn(2+) serves as cofactor. As to expression, expressed in young plants, stems and flowers.

The protein localises to the cell membrane. The catalysed reaction is [(1-&gt;4)-beta-D-glucosyl](n) + UDP-alpha-D-glucose = [(1-&gt;4)-beta-D-glucosyl](n+1) + UDP + H(+). Its pathway is glycan metabolism; plant cellulose biosynthesis. In terms of biological role, catalytic subunit of cellulose synthase terminal complexes ('rosettes'), required for beta-1,4-glucan microfibril crystallization, a major mechanism of the cell wall formation. This is Cellulose synthase A catalytic subunit 5 [UDP-forming] from Arabidopsis thaliana (Mouse-ear cress).